The following is a 144-amino-acid chain: Small ribosomal subunit protein eS12y (144 aa).

The residue at position 2 (Ser-2) is an N-acetylserine.

It belongs to the eukaryotic ribosomal protein eS12 family.

This Arabidopsis thaliana (Mouse-ear cress) protein is Small ribosomal subunit protein eS12y (RPS12C).